The chain runs to 1487 residues: Chromosome partition protein MukB (1487 aa).

34-41 is an ATP binding site; sequence GGNGAGKS. Coiled coils occupy residues 297 to 426, 460 to 666, 781 to 806, 836 to 1111, and 1210 to 1266; these read SSRE…LEKA, ALKH…RLAS, RAAREQRLELLRSEREEVVEKHAKAA, EQAL…RTFV, and VEAI…LSNI. A flexible hinge region spans residues 667 to 784; that stretch reads PGGSNDPRLK…VIPLFGRAAR (118 aa).

Belongs to the SMC family. MukB subfamily. Homodimerization via its hinge domain. Binds to DNA via its C-terminal region. Interacts, and probably forms a ternary complex, with MukE and MukF via its C-terminal region. The complex formation is stimulated by calcium or magnesium. Interacts with tubulin-related protein FtsZ.

The protein localises to the cytoplasm. The protein resides in the nucleoid. Functionally, plays a central role in chromosome condensation, segregation and cell cycle progression. Functions as a homodimer, which is essential for chromosome partition. Involved in negative DNA supercoiling in vivo, and by this means organize and compact chromosomes. May achieve or facilitate chromosome segregation by condensation DNA from both sides of a centrally located replisome during cell division. In Vibrio vulnificus (strain CMCP6), this protein is Chromosome partition protein MukB.